Reading from the N-terminus, the 239-residue chain is Phosducin-like protein 3 (239 aa).

Residues 16 to 37 (KKGILPPKETPVEEEEDEQLHL) form a disordered region. A Phosducin domain is found at 28–201 (EEEEDEQLHL…LEWRLSESGA (174 aa)). Residue S41 is modified to Phosphoserine. The thioredoxin fold stretch occupies residues 89-239 (FGELKEISGQ…RDGEEDSDED (151 aa)). A compositionally biased stretch (polar residues) spans 217–227 (QLMTSIRCSAN). The tract at residues 217–239 (QLMTSIRCSANTHRDGEEDSDED) is disordered.

This sequence belongs to the phosducin family. In terms of assembly, interacts (via thioredoxin fold region) with kdr/vegfr2 (via juxtamembrane domain). As to expression, expressed in endothelial cells.

It localises to the cytoplasm. It is found in the perinuclear region. The protein resides in the endoplasmic reticulum. Functionally, acts as a chaperone for the angiogenic VEGF receptor KDR/VEGFR2, increasing its abundance by inhibiting its ubiquitination and degradation. Inhibits the folding activity of the chaperonin-containing T-complex (CCT) which leads to inhibition of cytoskeletal actin folding. Acts as a chaperone during heat shock alongside HSP90 and HSP40/70 chaperone complexes. Modulates the activation of caspases during apoptosis. The sequence is that of Phosducin-like protein 3 from Danio rerio (Zebrafish).